Consider the following 120-residue polypeptide: Large ribosomal subunit protein bL20 (120 aa).

The protein belongs to the bacterial ribosomal protein bL20 family.

Functionally, binds directly to 23S ribosomal RNA and is necessary for the in vitro assembly process of the 50S ribosomal subunit. It is not involved in the protein synthesizing functions of that subunit. The protein is Large ribosomal subunit protein bL20 of Paracidovorax citrulli (strain AAC00-1) (Acidovorax citrulli).